Reading from the N-terminus, the 90-residue chain is Small ribosomal subunit protein bS16 (90 aa).

It belongs to the bacterial ribosomal protein bS16 family.

The sequence is that of Small ribosomal subunit protein bS16 from Bacillus cytotoxicus (strain DSM 22905 / CIP 110041 / 391-98 / NVH 391-98).